The chain runs to 125 residues: Large ribosomal subunit protein bL12 (125 aa).

It belongs to the bacterial ribosomal protein bL12 family. Homodimer. Part of the ribosomal stalk of the 50S ribosomal subunit. Forms a multimeric L10(L12)X complex, where L10 forms an elongated spine to which 2 to 4 L12 dimers bind in a sequential fashion. Binds GTP-bound translation factors.

In terms of biological role, forms part of the ribosomal stalk which helps the ribosome interact with GTP-bound translation factors. Is thus essential for accurate translation. The polypeptide is Large ribosomal subunit protein bL12 (Francisella tularensis subsp. novicida (strain U112)).